Here is a 228-residue protein sequence, read N- to C-terminus: Glucose-induced degradation protein 8 homolog (228 aa).

The LisH domain occupies 29 to 61; sequence SKSDLNKLVMNYLVIEGYQEAAAKFQEESSTQT. Positions 67-124 constitute a CTLH domain; it reads SIADRMAIRSAIQCGDVEKGIEIVNDLNPEILDTNPQLYFHLQQQKLIELIRKGMTAE.

Belongs to the GID8 family.

It localises to the cytoplasm. Its subcellular location is the nucleus. Its function is as follows. Core component of the CTLH E3 ubiquitin-protein ligase complex that mediates ubiquitination and subsequent proteasomal degradation of target proteins. Acts as a positive regulator of Wnt signaling pathway by promoting beta-catenin (CTNNB1) nuclear accumulation. This is Glucose-induced degradation protein 8 homolog from Dictyostelium discoideum (Social amoeba).